Reading from the N-terminus, the 322-residue chain is Endochitinase CH25 (322 aa).

A signal peptide spans 1-20 (MKSCLLLFLIFSFLLSFSLA). In terms of domain architecture, Chitin-binding type-1 spans 21-62 (EQCGRQAGGALCPNGLCCSEFGWCGDTEAYCKQPGCQSQCGG). Cystine bridges form between Cys-23–Cys-38, Cys-32–Cys-44, Cys-37–Cys-51, Cys-56–Cys-60, Cys-92–Cys-154, Cys-166–Cys-174, and Cys-273–Cys-305. Catalysis depends on Glu-136, which acts as the Proton donor.

It belongs to the glycosyl hydrolase 19 family. Chitinase class I subfamily. High expression in roots, moderate in floral tissues and low in stems and leaves.

The enzyme catalyses Random endo-hydrolysis of N-acetyl-beta-D-glucosaminide (1-&gt;4)-beta-linkages in chitin and chitodextrins.. The sequence is that of Endochitinase CH25 from Brassica napus (Rape).